Consider the following 314-residue polypeptide: Probable tRNA pseudouridine synthase B (314 aa).

The segment covering 1–10 has biased composition (basic residues); the sequence is MATRGRHRSR. The tract at residues 1 to 30 is disordered; the sequence is MATRGRHRSRTSGTSSEPMTLRAPPDERDL. Residue aspartate 72 is the Nucleophile of the active site. The 78-residue stretch at 237-314 folds into the PUA domain; that stretch reads LPRVTIAPSA…LVVELDRMLV (78 aa).

It belongs to the pseudouridine synthase TruB family. Type 2 subfamily.

The enzyme catalyses uridine(55) in tRNA = pseudouridine(55) in tRNA. In terms of biological role, could be responsible for synthesis of pseudouridine from uracil-55 in the psi GC loop of transfer RNAs. This is Probable tRNA pseudouridine synthase B from Haloarcula marismortui (strain ATCC 43049 / DSM 3752 / JCM 8966 / VKM B-1809) (Halobacterium marismortui).